The chain runs to 161 residues: Beta-lactoglobulin-1 (161 aa).

Disulfide bonds link Cys66–Cys159 and Cys106–Cys119.

Belongs to the calycin superfamily. Lipocalin family. In terms of assembly, monomer. As to expression, synthesized in mammary gland and secreted in milk.

The protein resides in the secreted. In terms of biological role, primary component of whey, it binds retinol and is probably involved in the transport of that molecule. This chain is Beta-lactoglobulin-1 (LGB1), found in Canis lupus familiaris (Dog).